Consider the following 255-residue polypeptide: Thiazole synthase (255 aa).

Catalysis depends on Lys-97, which acts as the Schiff-base intermediate with DXP. Residues Gly-158, 184-185 (AG), and 206-207 (NT) contribute to the 1-deoxy-D-xylulose 5-phosphate site.

Belongs to the ThiG family. In terms of assembly, homotetramer. Forms heterodimers with either ThiH or ThiS.

It localises to the cytoplasm. It catalyses the reaction [ThiS sulfur-carrier protein]-C-terminal-Gly-aminoethanethioate + 2-iminoacetate + 1-deoxy-D-xylulose 5-phosphate = [ThiS sulfur-carrier protein]-C-terminal Gly-Gly + 2-[(2R,5Z)-2-carboxy-4-methylthiazol-5(2H)-ylidene]ethyl phosphate + 2 H2O + H(+). It participates in cofactor biosynthesis; thiamine diphosphate biosynthesis. Catalyzes the rearrangement of 1-deoxy-D-xylulose 5-phosphate (DXP) to produce the thiazole phosphate moiety of thiamine. Sulfur is provided by the thiocarboxylate moiety of the carrier protein ThiS. In vitro, sulfur can be provided by H(2)S. In Acetivibrio thermocellus (strain ATCC 27405 / DSM 1237 / JCM 9322 / NBRC 103400 / NCIMB 10682 / NRRL B-4536 / VPI 7372) (Clostridium thermocellum), this protein is Thiazole synthase.